An 85-amino-acid polypeptide reads, in one-letter code: Beta-insect depressant toxin Lqh-dprIT3d (85 aa).

A signal peptide spans M1–A21. In terms of domain architecture, LCN-type CS-alpha/beta spans D22 to G82. Intrachain disulfides connect C31–C81, C35–C56, C42–C63, and C46–C65. At G82 the chain carries Glycine amide.

This sequence belongs to the long (4 C-C) scorpion toxin superfamily. Sodium channel inhibitor family. Beta subfamily. In terms of tissue distribution, expressed by the venom gland.

It is found in the secreted. Depressant insect beta-toxins cause a transient contraction paralysis followed by a slow flaccid paralysis. They bind voltage-independently at site-4 of sodium channels (Nav) and block action potentials, primarily by depolarizing the axonal membrane and suppressing the sodium current. This depressant toxin is active only on insects. It is found in a relatively small amount in the venom, and its activity on insects is 10-fold higher compared to other known depressant toxins. This chain is Beta-insect depressant toxin Lqh-dprIT3d, found in Leiurus hebraeus (Hebrew deathstalker scorpion).